Here is a 328-residue protein sequence, read N- to C-terminus: Malate dehydrogenase (328 aa).

NAD(+) is bound at residue 13-19 (GGTGQIA). Positions 94 and 100 each coordinate substrate. NAD(+)-binding positions include N107, Q114, and 131–133 (VGN). Positions 133 and 164 each coordinate substrate. Catalysis depends on H189, which acts as the Proton acceptor.

This sequence belongs to the LDH/MDH superfamily. MDH type 2 family.

It catalyses the reaction (S)-malate + NAD(+) = oxaloacetate + NADH + H(+). In terms of biological role, catalyzes the reversible oxidation of malate to oxaloacetate. This Chlamydia felis (strain Fe/C-56) (Chlamydophila felis) protein is Malate dehydrogenase.